The following is a 1045-amino-acid chain: Probable beta-glucosidase E (1045 aa).

The interval 1–74 is disordered; that stretch reads MAPPDSTHGG…SGSYQLRPVD (74 aa). The Cytoplasmic portion of the chain corresponds to 1-163; the sequence is MAPPDSTHGG…PVKYARIWWR (163 aa). Positions 11 to 20 are enriched in basic and acidic residues; sequence SFRDHLKTND. The helical; Signal-anchor for type II membrane protein transmembrane segment at 164–184 threads the bilayer; the sequence is TLLAVIVTLAVVVWGFLSFAV. The Extracellular segment spans residues 185-1045; sequence SHREEPKVWP…SRDLPLMGEY (861 aa). Asn226, Asn234, and Asn402 each carry an N-linked (GlcNAc...) asparagine glycan. Asp430 is an active-site residue. Residues Asn473, Asn512, Asn577, Asn893, Asn902, and Asn988 are each glycosylated (N-linked (GlcNAc...) asparagine).

It belongs to the glycosyl hydrolase 3 family.

It localises to the cell membrane. The catalysed reaction is Hydrolysis of terminal, non-reducing beta-D-glucosyl residues with release of beta-D-glucose.. Its pathway is glycan metabolism; cellulose degradation. Functionally, beta-glucosidases are one of a number of cellulolytic enzymes involved in the degradation of cellulosic biomass. Catalyzes the last step releasing glucose from the inhibitory cellobiose. The sequence is that of Probable beta-glucosidase E (bglE) from Neosartorya fischeri (strain ATCC 1020 / DSM 3700 / CBS 544.65 / FGSC A1164 / JCM 1740 / NRRL 181 / WB 181) (Aspergillus fischerianus).